Reading from the N-terminus, the 317-residue chain is Acetyl-coenzyme A carboxylase carboxyl transferase subunit alpha (317 aa).

The CoA carboxyltransferase C-terminal domain occupies 40-294 (RLQHKSQELT…KQQILADLAE (255 aa)).

Belongs to the AccA family. Acetyl-CoA carboxylase is a heterohexamer composed of biotin carboxyl carrier protein (AccB), biotin carboxylase (AccC) and two subunits each of ACCase subunit alpha (AccA) and ACCase subunit beta (AccD).

Its subcellular location is the cytoplasm. It catalyses the reaction N(6)-carboxybiotinyl-L-lysyl-[protein] + acetyl-CoA = N(6)-biotinyl-L-lysyl-[protein] + malonyl-CoA. It participates in lipid metabolism; malonyl-CoA biosynthesis; malonyl-CoA from acetyl-CoA: step 1/1. Component of the acetyl coenzyme A carboxylase (ACC) complex. First, biotin carboxylase catalyzes the carboxylation of biotin on its carrier protein (BCCP) and then the CO(2) group is transferred by the carboxyltransferase to acetyl-CoA to form malonyl-CoA. In Haemophilus ducreyi (strain 35000HP / ATCC 700724), this protein is Acetyl-coenzyme A carboxylase carboxyl transferase subunit alpha.